Here is a 345-residue protein sequence, read N- to C-terminus: Anthranilate phosphoribosyltransferase (345 aa).

5-phospho-alpha-D-ribose 1-diphosphate-binding positions include G88, 91-92 (GD), T96, 98-101 (NIST), 116-124 (KHGNRSASG), and S128. G88 serves as a coordination point for anthranilate. Mg(2+) is bound at residue S100. N119 contributes to the anthranilate binding site. R174 serves as a coordination point for anthranilate. D233 and E234 together coordinate Mg(2+).

This sequence belongs to the anthranilate phosphoribosyltransferase family. In terms of assembly, homodimer. Mg(2+) serves as cofactor.

It carries out the reaction N-(5-phospho-beta-D-ribosyl)anthranilate + diphosphate = 5-phospho-alpha-D-ribose 1-diphosphate + anthranilate. The protein operates within amino-acid biosynthesis; L-tryptophan biosynthesis; L-tryptophan from chorismate: step 2/5. Its function is as follows. Catalyzes the transfer of the phosphoribosyl group of 5-phosphorylribose-1-pyrophosphate (PRPP) to anthranilate to yield N-(5'-phosphoribosyl)-anthranilate (PRA). The protein is Anthranilate phosphoribosyltransferase of Prochlorococcus marinus (strain NATL1A).